The primary structure comprises 852 residues: Protein SBE22 (852 aa).

The segment at 1–158 (MTSIQERGTS…ADKSKINTFP (158 aa)) is disordered. Over residues 15–26 (SLKEGEASDRSS) the composition is skewed to basic and acidic residues. Positions 43–61 (PPSQTTLGRSRAGSNTMNK) are enriched in polar residues. At serine 72 the chain carries Phosphoserine. The span at 74–96 (NLLSNMNCSDNGNGGNMLNSFVN) shows a compositional bias: polar residues. The segment covering 124 to 139 (TTEVFSSTSASSSLGD) has biased composition (low complexity). Residue serine 201 is modified to Phosphoserine. The interval 206–248 (AAEKTMNKSRHSYQEQFSSKKSQSSLLNSKQRSRAKSQTCSST) is disordered. Residues 224 to 235 (SKKSQSSLLNSK) are compositionally biased toward low complexity. Residues serine 459, serine 517, and serine 520 each carry the phosphoserine modification.

It belongs to the SBE2 family.

The protein resides in the cytoplasm. The protein localises to the golgi apparatus. Its function is as follows. With SBE2, is involved in cell wall integrity and polarity processes like bud growth, through the transport of CHS3 and UTR2 to sites of growth. The protein is Protein SBE22 (SBE22) of Saccharomyces cerevisiae (strain YJM789) (Baker's yeast).